A 198-amino-acid chain; its full sequence is Na(+)-translocating NADH-quinone reductase subunit E (198 aa).

6 helical membrane passes run 11–31 (SIFI…FLAV), 39–59 (FGLG…NNLV), 77–97 (FLNF…LEMI), 110–130 (GIFL…SFMV), 140–160 (VVYG…LAGI), and 176–196 (LGIT…FSGV).

It belongs to the NqrDE/RnfAE family. As to quaternary structure, composed of six subunits; NqrA, NqrB, NqrC, NqrD, NqrE and NqrF.

It localises to the cell inner membrane. It carries out the reaction a ubiquinone + n Na(+)(in) + NADH + H(+) = a ubiquinol + n Na(+)(out) + NAD(+). NQR complex catalyzes the reduction of ubiquinone-1 to ubiquinol by two successive reactions, coupled with the transport of Na(+) ions from the cytoplasm to the periplasm. NqrA to NqrE are probably involved in the second step, the conversion of ubisemiquinone to ubiquinol. The polypeptide is Na(+)-translocating NADH-quinone reductase subunit E (Vibrio anguillarum (Listonella anguillarum)).